A 772-amino-acid polypeptide reads, in one-letter code: Angiomotin-like protein 2 (772 aa).

Disordered regions lie at residues 41–158 (GGAG…HVRS), 170–239 (RNGA…SPHF), and 260–299 (QYQY…PSAQ). 3 stretches are compositionally biased toward basic and acidic residues: residues 80 to 91 (QGGETHLAENRL), 100 to 112 (KGEE…EAKA), and 142 to 153 (RRQDEALRELRH). The interval 101–303 (GEELPTYEEA…GPPSAQATLG (203 aa)) is required for interaction with CDH5. Tyr107 carries the post-translational modification Phosphotyrosine; by FGFR1. The span at 178-191 (HMSSSHSFPQLARS) shows a compositional bias: polar residues. Over residues 197–214 (PRGPPAEGPEPRGPPPQY) the composition is skewed to pro residues. Residues 221–303 (QETAAVTDPR…GPPSAQATLG (83 aa)) are required for interaction with CDH1. A coiled-coil region spans residues 305–578 (AHLAQMETVL…KYLEERAMRQ (274 aa)). Glycyl lysine isopeptide (Lys-Gly) (interchain with G-Cter in ubiquitin) cross-links involve residues Lys343 and Lys404. Disordered stretches follow at residues 596-615 (IRHS…LLPG) and 680-752 (GLVS…RTPS). Positions 686-699 (RQTDARPAGDRVPA) are enriched in basic and acidic residues. The span at 718–733 (DGSTQTDGPADNTSAC) shows a compositional bias: polar residues. A phosphoserine mark is found at Ser752 and Ser755. Residues 769–772 (EILI) carry the PDZ-binding motif.

It belongs to the angiomotin family. As to quaternary structure, part of a complex composed of AMOTL2, MAGI1 and CDH5, within the complex AMOTL2 acts as a scaffold protein for the interaction of MAGI1 with CDH5. The complex is required for coupling actin fibers to cell junctions in endothelial cells. Within the complex AMOTL2 (via its N-terminus) interacts with CDH5. Interacts (via N-terminus) with MAGI1. Interacts (via N-terminus) with ACTB; the interaction facilitates binding of cell junction complexes to actin fibers in endothelial cells. Interacts with CDH1; the interaction may facilitate binding of radial actin fibers to cell junction complexes. Interacts with SRC. Interacts with YAP1; the interaction is required for ubiquitination of AMOTL2 and localization of YAP1 to tight junctions. Interacts with WWP1; the interaction facilitates WWP1 interaction with the Crumbs complex and subsequent WWP1 translocation to the plasma membrane. WWP1 interaction with the Crumbs complex promotes WWP1 monoubiquitination of AMOTL2 which subsequently activates the Hippo signaling pathway. When ubiquitinated interacts with LATS2 (via UBA domain); the interaction promotes LATS2 phosphorylation of YAP1. Interacts (via PPXY motif) with WWTR1/TAZ (via WW domain); the interaction promotes WWTR1/TAZ localization to the cytoplasm and thereby inhibition of its transcriptional properties. Interacts with PHLDB2; interaction may facilitate PHLDB2 localization to the myotube podosome cortex that surrounds the core. Post-translationally, phosphorylation at Tyr-107 is necessary for efficient binding to SRC and synergistically functioning with SRC to activate the downstream MAPK pathway. In terms of processing, monoubiquitinated at Lys-343 and Lys-404 by Crumbs complex-bound WWP1. De-ubiquitinated at Lys-343 and Lys-404 by USP9X; the interaction may be promoted by cell contact inhibition. Deubiquitination of AMOTL2 negatively regulates Hippo signaling activation. Expressed in skeletal muscle at neuromuscular junctions (at protein level).

The protein localises to the recycling endosome. It localises to the cytoplasm. It is found in the cell projection. The protein resides in the podosome. Its subcellular location is the cell junction. In terms of biological role, regulates the translocation of phosphorylated SRC to peripheral cell-matrix adhesion sites. Required for proper architecture of actin filaments. Plays a role in coupling actin fibers to cell junctions in endothelial cells and is therefore required for correct endothelial cell morphology via facilitating transcellular transmission of mechanical force resulting in endothelial cell elongation. Required for the anchoring of radial actin fibers to CDH1 junction complexes at the cell membrane which facilitates organization of radial actin fiber structure and cellular response to contractile forces. This contributes to maintenance of cell area, size, shape, epithelial sheet organization and trophectoderm cell properties that facilitate blastocyst zona hatching. Inhibits the Wnt/beta-catenin signaling pathway, probably by recruiting CTNNB1 to recycling endosomes and hence preventing its translocation to the nucleus. Participates in angiogenesis. Activates the Hippo signaling pathway in response to cell contact inhibition via interaction with and ubiquitination by Crumbs complex-bound WWP1. Ubiquitinated AMOTL2 then interacts with LATS2 which in turn phosphorylates YAP1, excluding it from the nucleus and localizing it to the cytoplasm and tight junctions, therefore ultimately repressing YAP1-driven transcription of target genes. Acts to inhibit WWTR1/TAZ transcriptional coactivator activity via sequestering WWTR1/TAZ in the cytoplasm and at tight junctions. Regulates the size and protein composition of the podosome cortex and core at myofibril neuromuscular junctions. Selectively promotes FGF-induced MAPK activation through SRC. May play a role in the polarity, proliferation and migration of endothelial cells. This is Angiomotin-like protein 2 from Mus musculus (Mouse).